Reading from the N-terminus, the 302-residue chain is MSDVLINPARVRRVKPLSAEEVVSAVERALLTEVRLTPKPGLVDIRNAGAHWDMDLASFEASTAVVAPWMEKFFIMGHDTAAVAPEQVLMMLRPVGMACENDMLEATGGVNTHRGAIFAFGLLSAAAGRLVSKGEPIEQHRLCDQVARFCRGMVMQELSSAGGERLSKGEAHFLRYGLSGARGEAESGFLTVRTQAMPVFTRMMEETGDSNLALLQTLLHLMAWNDDTNLVSRGGLAGLNFVQQEAQRLLWQGGVLADGGLEALRQFDDELIARHLSPGGSADLLAVTWFLSAFPAGALFPL.

It belongs to the CitG/MdcB family.

The enzyme catalyses 3'-dephospho-CoA + ATP = 2'-(5''-triphospho-alpha-D-ribosyl)-3'-dephospho-CoA + adenine. Functionally, catalyzes the formation of 2-(5''-triphosphoribosyl)-3'-dephosphocoenzyme-A, the precursor of the prosthetic group of the holo-acyl carrier protein (gamma chain) of citrate lyase, from ATP and dephospho-CoA. The sequence is that of 2-(5''-triphosphoribosyl)-3'-dephosphocoenzyme-A synthase (citG) from Klebsiella pneumoniae.